We begin with the raw amino-acid sequence, 375 residues long: Queuine tRNA-ribosyltransferase (375 aa).

Catalysis depends on Asp89, which acts as the Proton acceptor. Residues 89-93 (DSGGF), Asp143, Gln187, and Gly214 each bind substrate. An RNA binding region spans residues 245 to 251 (GVGKPED). Asp264 functions as the Nucleophile in the catalytic mechanism. Residues 269 to 273 (TRNAR) are RNA binding; important for wobble base 34 recognition. Residues Cys302, Cys304, Cys307, and His333 each coordinate Zn(2+).

The protein belongs to the queuine tRNA-ribosyltransferase family. Homodimer. Within each dimer, one monomer is responsible for RNA recognition and catalysis, while the other monomer binds to the replacement base PreQ1. Zn(2+) is required as a cofactor.

The catalysed reaction is 7-aminomethyl-7-carbaguanine + guanosine(34) in tRNA = 7-aminomethyl-7-carbaguanosine(34) in tRNA + guanine. It participates in tRNA modification; tRNA-queuosine biosynthesis. Its function is as follows. Catalyzes the base-exchange of a guanine (G) residue with the queuine precursor 7-aminomethyl-7-deazaguanine (PreQ1) at position 34 (anticodon wobble position) in tRNAs with GU(N) anticodons (tRNA-Asp, -Asn, -His and -Tyr). Catalysis occurs through a double-displacement mechanism. The nucleophile active site attacks the C1' of nucleotide 34 to detach the guanine base from the RNA, forming a covalent enzyme-RNA intermediate. The proton acceptor active site deprotonates the incoming PreQ1, allowing a nucleophilic attack on the C1' of the ribose to form the product. After dissociation, two additional enzymatic reactions on the tRNA convert PreQ1 to queuine (Q), resulting in the hypermodified nucleoside queuosine (7-(((4,5-cis-dihydroxy-2-cyclopenten-1-yl)amino)methyl)-7-deazaguanosine). The chain is Queuine tRNA-ribosyltransferase from Klebsiella pneumoniae subsp. pneumoniae (strain ATCC 700721 / MGH 78578).